We begin with the raw amino-acid sequence, 109 residues long: Large ribosomal subunit protein uL18c (109 aa).

The protein belongs to the universal ribosomal protein uL18 family. In terms of assembly, part of the 50S ribosomal subunit; contacts the 5S rRNA.

It is found in the plastid. The protein resides in the chloroplast. Binds 5S rRNA, forms part of the central protuberance of the 50S subunit. This chain is Large ribosomal subunit protein uL18c (rpl18), found in Cyanidioschyzon merolae (strain NIES-3377 / 10D) (Unicellular red alga).